We begin with the raw amino-acid sequence, 343 residues long: Ornithine carbamoyltransferase (343 aa).

Carbamoyl phosphate contacts are provided by residues 62-65 (STRT), Gln89, Arg113, and 140-143 (HPTQ). Residues Asn172, Asp236, and 240-241 (SM) contribute to the L-ornithine site. Carbamoyl phosphate contacts are provided by residues 278–279 (CL) and Arg323.

This sequence belongs to the aspartate/ornithine carbamoyltransferase superfamily. OTCase family.

Its subcellular location is the cytoplasm. The enzyme catalyses carbamoyl phosphate + L-ornithine = L-citrulline + phosphate + H(+). It participates in amino-acid degradation; L-arginine degradation via ADI pathway; carbamoyl phosphate from L-arginine: step 2/2. Reversibly catalyzes the transfer of the carbamoyl group from carbamoyl phosphate (CP) to the N(epsilon) atom of ornithine (ORN) to produce L-citrulline. In Levilactobacillus brevis (strain ATCC 367 / BCRC 12310 / CIP 105137 / JCM 1170 / LMG 11437 / NCIMB 947 / NCTC 947) (Lactobacillus brevis), this protein is Ornithine carbamoyltransferase.